The chain runs to 465 residues: Cruciferin CRU4 (465 aa).

An N-terminal signal peptide occupies residues 1–22; the sequence is MGPTSLLSFFFTFLTLFHGFTA. Disulfide bonds link Cys29–Cys62 and Cys105–Cys283. Cupin type-1 domains lie at 34–236 and 289–438; these read LNAL…ETAQ and ENLD…QEAR. Thr108 is modified (phosphothreonine). A disordered region spans residues 112-135; sequence SPVFGQGQGQEQGQGQGQGQGQGF. Residues 117 to 133 show a composition bias toward gly residues; sequence QGQGQEQGQGQGQGQGQ. Position 306 is a phosphotyrosine (Tyr306). Phosphoserine occurs at positions 308 and 443.

This sequence belongs to the 11S seed storage protein (globulins) family. In terms of assembly, heterohexamer; each subunit is composed of an acidic and a basic chain derived from a single precursor and linked by a disulfide bond.

It localises to the rough endoplasmic reticulum. Its function is as follows. This is a seed storage protein. The sequence is that of Cruciferin CRU4 (CRU4) from Brassica napus (Rape).